The chain runs to 173 residues: Large ribosomal subunit protein uL10 (173 aa).

It belongs to the universal ribosomal protein uL10 family. Part of the ribosomal stalk of the 50S ribosomal subunit. The N-terminus interacts with L11 and the large rRNA to form the base of the stalk. The C-terminus forms an elongated spine to which L12 dimers bind in a sequential fashion forming a multimeric L10(L12)X complex.

Forms part of the ribosomal stalk, playing a central role in the interaction of the ribosome with GTP-bound translation factors. The polypeptide is Large ribosomal subunit protein uL10 (Nitratidesulfovibrio vulgaris (strain ATCC 29579 / DSM 644 / CCUG 34227 / NCIMB 8303 / VKM B-1760 / Hildenborough) (Desulfovibrio vulgaris)).